Reading from the N-terminus, the 911-residue chain is Gem-associated protein 4a (911 aa).

Component of the core survival motor neuron (SMN) complex composed of Smn, Gem2, Gem3, rig/Gem5 and one of 3 almost identical Gem4 paralogs encoded by Glos/Gem4a, Gem4b or Gem4c. Interacts with Smn; the interaction is probably indirect.

Its function is as follows. Component of the survival motor neuron (SMN) complex that catalyzes the assembly of small nuclear ribonucleoproteins (snRNPs), the building blocks of the spliceosome, and thereby plays an important role in the splicing of cellular pre-mRNAs. One of 3 almost identical paralogs (Glos/Gem4a, Gem4b and Gem4c), resulting from a genomic triplication, that have some redundant function. Required for neuromuscular function and organismal viability. This is Gem-associated protein 4a from Drosophila melanogaster (Fruit fly).